The primary structure comprises 348 residues: D-alanine--D-alanine ligase (348 aa).

Residues 132–334 (KRILEVAGVP…YSDIIKELVV (203 aa)) enclose the ATP-grasp domain. 162–217 (LEKLTFPVFVKPANMGSSVGISKAENESELRSAIDLALKYDSRILIEQGVVAREIE) is an ATP binding site. Residues D288, E301, and N303 each contribute to the Mg(2+) site.

Belongs to the D-alanine--D-alanine ligase family. Mg(2+) serves as cofactor. Mn(2+) is required as a cofactor.

Its subcellular location is the cytoplasm. The catalysed reaction is 2 D-alanine + ATP = D-alanyl-D-alanine + ADP + phosphate + H(+). The protein operates within cell wall biogenesis; peptidoglycan biosynthesis. Cell wall formation. In Streptococcus thermophilus (strain CNRZ 1066), this protein is D-alanine--D-alanine ligase.